Here is a 948-residue protein sequence, read N- to C-terminus: RNA polymerase-associated protein RapA (948 aa).

The Helicase ATP-binding domain maps to 164 to 332 (EVADRIAPRV…FARLRLLDPN (169 aa)). 177–184 (DEVGLGKT) provides a ligand contact to ATP. The short motif at 278–281 (DEAH) is the DEAH box element. One can recognise a Helicase C-terminal domain in the interval 473-627 (RVDWLIDTLK…TCPTGNALQH (155 aa)).

The protein belongs to the SNF2/RAD54 helicase family. RapA subfamily. As to quaternary structure, interacts with the RNAP. Has a higher affinity for the core RNAP than for the holoenzyme. Its ATPase activity is stimulated by binding to RNAP.

Transcription regulator that activates transcription by stimulating RNA polymerase (RNAP) recycling in case of stress conditions such as supercoiled DNA or high salt concentrations. Probably acts by releasing the RNAP, when it is trapped or immobilized on tightly supercoiled DNA. Does not activate transcription on linear DNA. Probably not involved in DNA repair. This is RNA polymerase-associated protein RapA from Pseudomonas savastanoi pv. phaseolicola (strain 1448A / Race 6) (Pseudomonas syringae pv. phaseolicola (strain 1448A / Race 6)).